Consider the following 704-residue polypeptide: Inhibitor of carbonic anhydrase (704 aa).

Positions Met1–Ala19 are cleaved as a signal peptide. Transferrin-like domains lie at Val25 to Arg347 and Val357 to Gln689. Cystine bridges form between Cys28/Cys67, Cys38/Cys58, Cys137/Cys213, Cys172/Cys188, Cys175/Cys196, Cys185/Cys198, Cys246/Cys260, Cys360/Cys392, Cys370/Cys383, Cys417/Cys699, Cys440/Cys662, Cys472/Cys549, Cys496/Cys690, Cys506/Cys520, Cys517/Cys532, and Cys589/Cys603. Asn491 carries N-linked (GlcNAc...) asparagine glycosylation.

Belongs to the transferrin family. Monomer. Interacts (via transferrin-like domain 2) with CA2. N-glycosylated. Blood plasma (at protein level).

The protein resides in the secreted. Its function is as follows. Inhibitor for carbonic anhydrase 2 (CA2). Does not bind iron ions. In Sus scrofa (Pig), this protein is Inhibitor of carbonic anhydrase.